Consider the following 261-residue polypeptide: 4-hydroxy-tetrahydrodipicolinate reductase (261 aa).

Residues 13 to 18 (GMAGRM), 91 to 93 (GTS), and 115 to 118 (APNF) each bind NAD(+). The active-site Proton donor/acceptor is histidine 149. Histidine 150 contacts (S)-2,3,4,5-tetrahydrodipicolinate. Catalysis depends on lysine 153, which acts as the Proton donor. 159 to 160 (GT) contacts (S)-2,3,4,5-tetrahydrodipicolinate.

This sequence belongs to the DapB family.

It is found in the cytoplasm. The catalysed reaction is (S)-2,3,4,5-tetrahydrodipicolinate + NAD(+) + H2O = (2S,4S)-4-hydroxy-2,3,4,5-tetrahydrodipicolinate + NADH + H(+). It carries out the reaction (S)-2,3,4,5-tetrahydrodipicolinate + NADP(+) + H2O = (2S,4S)-4-hydroxy-2,3,4,5-tetrahydrodipicolinate + NADPH + H(+). The protein operates within amino-acid biosynthesis; L-lysine biosynthesis via DAP pathway; (S)-tetrahydrodipicolinate from L-aspartate: step 4/4. Functionally, catalyzes the conversion of 4-hydroxy-tetrahydrodipicolinate (HTPA) to tetrahydrodipicolinate. In Granulibacter bethesdensis (strain ATCC BAA-1260 / CGDNIH1), this protein is 4-hydroxy-tetrahydrodipicolinate reductase.